The primary structure comprises 163 residues: T-cell surface glycoprotein CD3 zeta chain (163 aa).

The signal sequence occupies residues Met-1 to Ala-21. Topologically, residues Gln-22–Lys-30 are extracellular. Residues Leu-31 to Leu-51 form a helical membrane-spanning segment. The Cytoplasmic segment spans residues Arg-52 to Arg-163. Ser-58 is subject to Phosphoserine. ITAM domains are found at residues Ala-61–Arg-89, Lys-99–Met-127, and Glu-130–Gln-158. 7 positions are modified to phosphotyrosine: Tyr-64, Tyr-72, Tyr-83, Tyr-110, Tyr-122, Tyr-141, and Tyr-152. The segment covering Tyr-83 to Gly-98 has biased composition (basic and acidic residues). The tract at residues Tyr-83–Asn-111 is disordered.

It belongs to the CD3Z/FCER1G family. In terms of assembly, the TCR-CD3 complex is composed of a CD3D/CD3E and a CD3G/CD3E heterodimers that preferentially associate with TCRalpha and TCRbeta, respectively, to form TCRalpha/CD3E/CD3G and TCRbeta/CD3G/CD3E trimers. In turn, the hexamer interacts with CD3Z homodimer to form the TCR-CD3 complex. Alternatively, TCRalpha and TCRbeta can be replaced by TCRgamma and TCRdelta. Interacts with SLA. Interacts with TRAT1. Interacts with DOCK2. Interacts with SLA2. Interacts with SHB. Interacts with ZAP70. Interacts (tyrosine phosphorylated) with SHC1 (via SH2 domain). Interacts with PTPRC. Interacts with CRK; this interaction regulates CD3Z phosphorylation. Interacts (on T cell side) with CD81, ICAM1 and CD9 at immunological synapses between antigen-presenting cells and T cells. Interacts with CD160. Interacts with LY6E. Interacts with LY6E. The signaling subunit of immunoglobulin gamma (IgG) Fc receptor complex. As a homodimer or a heterodimer with FCER1G, associates with the ligand binding subunit FCGR3A (via transmembrane domain); this interaction is a prerequisite for Fc receptor complex expression on the cell surface. Interacts with CD5. Post-translationally, phosphorylated on Tyr residues after T-cell receptor triggering by LCK in association with CD4/CD8.

It localises to the cell membrane. Part of the TCR-CD3 complex present on T-lymphocyte cell surface that plays an essential role in adaptive immune response. When antigen presenting cells (APCs) activate T-cell receptor (TCR), TCR-mediated signals are transmitted across the cell membrane by the CD3 chains CD3D, CD3E, CD3G and CD3Z. All CD3 chains contain immunoreceptor tyrosine-based activation motifs (ITAMs) in their cytoplasmic domain. Upon TCR engagement, these motifs become phosphorylated by Src family protein tyrosine kinases LCK and FYN, resulting in the activation of downstream signaling pathways. CD3Z ITAMs phosphorylation creates multiple docking sites for the protein kinase ZAP70 leading to ZAP70 phosphorylation and its conversion into a catalytically active enzyme. Plays an important role in intrathymic T-cell differentiation. Additionally, participates in the activity-dependent synapse formation of retinal ganglion cells (RGCs) in both the retina and dorsal lateral geniculate nucleus (dLGN). The protein is T-cell surface glycoprotein CD3 zeta chain (CD247) of Sus scrofa (Pig).